The chain runs to 166 residues: Urease accessory protein UreE (166 aa).

The protein belongs to the UreE family.

It localises to the cytoplasm. In terms of biological role, involved in urease metallocenter assembly. Binds nickel. Probably functions as a nickel donor during metallocenter assembly. This chain is Urease accessory protein UreE, found in Azotobacter vinelandii (strain DJ / ATCC BAA-1303).